The following is a 346-amino-acid chain: MAASQAVEEMRSRVVLGEFGVRNVHTTDFPGNYSGYDDAWDQDRFEKNFRVDVVHMDENSLEFDMVGIDAAIANAFRRILLAEVPTMAVEKVLVYNNTSIVQDEILAHRLGLIPIHADPRLFEYRNQGDEEGTEIDTLQFRLQVRCTRNPHAAKDSSDPNELYVNHKVYTRHMTWIPLGNQADLFPEGTIRPVHDDILIAQLRPGQEIDLLMHCVKGIGKDHAKFSPVATASYRLLPDITLLEPVEGEAAEELSRCFSPGVIEVQEVQGKKVARVANPRLDTFSREIFRNEKLKKVVRLARVRDHYIFSVESTGVLPPDVLVSEAIKVLMGKCRRFLDELDAVQMD.

An N-acetylalanine modification is found at Ala-2. Ser-4 bears the Phosphoserine mark.

Belongs to the archaeal Rpo3/eukaryotic RPB3 RNA polymerase subunit family. As to quaternary structure, component of the RNA polymerase I and RNA polymerase III complexes consisting of at least 13 and 17 subunits, respectively. Pol I complex consists of a ten-subunit catalytic core composed of POLR1A/RPA1, POLR1B/RPA2, POLR1C/RPAC1, POLR1D/RPAC2, POLR1H/RPA12, POLR2E/RPABC1, POLR2F/RPABC2, POLR2H/RPABC3, POLR2K/RPABC4 and POLR2L/RPABC5; a mobile stalk subunit POLR1F/RPA43 protruding from the core and additional subunits homologous to general transcription factors POLR1E/RPA49 and POLR1G/RPA34. Part of Pol I pre-initiation complex (PIC), in which Pol I core assembles with RRN3 and promoter-bound UTBF and SL1/TIF-IB complex. Pol III complex consists of a ten-subunit catalytic core composed of POLR3A/RPC1, POLR3B/RPC2, POLR1C/RPAC1, POLR1D/RPAC2, POLR3K/RPC10, POLR2E/RPABC1, POLR2F/RPABC2, POLR2H/RPABC3, POLR2K/RPABC4 and POLR2L/RPABC5; a mobile stalk composed of two subunits POLR3H/RPC8 and CRCP/RPC9, protruding from the core and functioning primarily in transcription initiation; and additional subunits homologous to general transcription factors of the RNA polymerase II machinery, POLR3C/RPC3-POLR3F/RPC6-POLR3G/RPC7 heterotrimer required for transcription initiation and POLR3D/RPC4-POLR3E/RPC5 heterodimer involved in both transcription initiation and termination.

Its subcellular location is the nucleus. The protein resides in the nucleolus. The protein localises to the cytoplasm. It is found in the cytosol. In terms of biological role, DNA-dependent RNA polymerase catalyzes the transcription of DNA into RNA using the four ribonucleoside triphosphates as substrates. Common component of RNA polymerases I and III which synthesize ribosomal RNA precursors and short non-coding RNAs including 5S rRNA, snRNAs, tRNAs and miRNAs, respectively. POLR1C/RPAC1 is part of the polymerase core and may function as a clamp element that moves to open and close the cleft. This is DNA-directed RNA polymerases I and III subunit RPAC1 from Homo sapiens (Human).